A 590-amino-acid polypeptide reads, in one-letter code: Arginine--tRNA ligase, cytoplasmic (590 aa).

N-acetylalanine is present on alanine 2. Residues 137 to 139 (SPN), histidine 148, tyrosine 322, aspartate 326, and glutamine 350 each bind L-arginine. The 'HIGH' region motif lies at 138-149 (PNIAKEMHVGHL). The segment at 470–484 (DTAVYLLYAHARICS) is interaction with tRNA.

Belongs to the class-I aminoacyl-tRNA synthetase family.

It is found in the cytoplasm. It localises to the cytosol. It carries out the reaction tRNA(Arg) + L-arginine + ATP = L-arginyl-tRNA(Arg) + AMP + diphosphate. Its function is as follows. Forms part of a macromolecular complex that catalyzes the attachment of specific amino acids to cognate tRNAs during protein synthesis. This chain is Arginine--tRNA ligase, cytoplasmic, found in Arabidopsis thaliana (Mouse-ear cress).